We begin with the raw amino-acid sequence, 453 residues long: tRNA modification GTPase MnmE (453 aa).

(6S)-5-formyl-5,6,7,8-tetrahydrofolate contacts are provided by Arg-22, Glu-79, and Lys-119. One can recognise a TrmE-type G domain in the interval Gly-215 to Gly-376. Residue Asn-225 participates in K(+) binding. GTP is bound by residues Asn-225 to Ser-230, Thr-244 to Thr-250, Asp-269 to Gly-272, and Asn-334 to Asp-337. Residue Ser-229 participates in Mg(2+) binding. K(+) is bound by residues Thr-244, Ile-246, and Thr-249. Thr-250 contributes to the Mg(2+) binding site. Residue Lys-453 coordinates (6S)-5-formyl-5,6,7,8-tetrahydrofolate.

The protein belongs to the TRAFAC class TrmE-Era-EngA-EngB-Septin-like GTPase superfamily. TrmE GTPase family. In terms of assembly, homodimer. Heterotetramer of two MnmE and two MnmG subunits. Requires K(+) as cofactor.

Its subcellular location is the cytoplasm. Its function is as follows. Exhibits a very high intrinsic GTPase hydrolysis rate. Involved in the addition of a carboxymethylaminomethyl (cmnm) group at the wobble position (U34) of certain tRNAs, forming tRNA-cmnm(5)s(2)U34. This is tRNA modification GTPase MnmE from Shewanella amazonensis (strain ATCC BAA-1098 / SB2B).